The sequence spans 475 residues: Probable sensor histidine kinase TcrY (475 aa).

Residues 1-153 (MGITAATEMA…NVDATMLQML (153 aa)) lie on the Extracellular side of the membrane. The helical transmembrane segment at 154–174 (IIFGIVTVIALVAATTAGIVI) threads the bilayer. Topologically, residues 175–475 (IKRALAPLRR…GWQPLESSPR (301 aa)) are cytoplasmic. One can recognise an HAMP domain in the interval 176–238 (KRALAPLRRV…MLDHIAAALS (63 aa)). A Histidine kinase domain is found at 253–466 (DASHELRTPL…EFAVRLPLDG (214 aa)). The residue at position 256 (histidine 256) is a Phosphohistidine; by autocatalysis.

In terms of assembly, homodimer. A divalent metal cation serves as cofactor. Post-translationally, autophosphorylated.

It is found in the cell membrane. The catalysed reaction is ATP + protein L-histidine = ADP + protein N-phospho-L-histidine.. Its function is as follows. Member of the two-component regulatory system TcrY/TcrX. Activates TcrX by phosphorylation. The chain is Probable sensor histidine kinase TcrY (tcrY) from Mycobacterium tuberculosis (strain ATCC 25618 / H37Rv).